A 216-amino-acid chain; its full sequence is MSIGVIVFPGSNCDRDVQWATDGCLGMSTRRVWHEETDLSGFDAIILPGGFSYGDYLRCGAIARFAPALQSLIDFAAKGGRVLGICNGFQVLTELGLLPGALTRNQNLHFICEDAPLKVVSQRTAWMQGYNDRALTLPIAHGEGRYQCSDDTLKQLQDDDAIALSYGNNPNGSVFNIAGITNASGSVLGLMPHPERACDPAIGGTDGRRMLEALLG.

The 215-residue stretch at S2 to G216 folds into the Glutamine amidotransferase type-1 domain. Catalysis depends on C86, which acts as the Nucleophile. Catalysis depends on residues H193 and E195.

As to quaternary structure, part of the FGAM synthase complex composed of 1 PurL, 1 PurQ and 2 PurS subunits.

The protein localises to the cytoplasm. It carries out the reaction N(2)-formyl-N(1)-(5-phospho-beta-D-ribosyl)glycinamide + L-glutamine + ATP + H2O = 2-formamido-N(1)-(5-O-phospho-beta-D-ribosyl)acetamidine + L-glutamate + ADP + phosphate + H(+). It catalyses the reaction L-glutamine + H2O = L-glutamate + NH4(+). The protein operates within purine metabolism; IMP biosynthesis via de novo pathway; 5-amino-1-(5-phospho-D-ribosyl)imidazole from N(2)-formyl-N(1)-(5-phospho-D-ribosyl)glycinamide: step 1/2. Its function is as follows. Part of the phosphoribosylformylglycinamidine synthase complex involved in the purines biosynthetic pathway. Catalyzes the ATP-dependent conversion of formylglycinamide ribonucleotide (FGAR) and glutamine to yield formylglycinamidine ribonucleotide (FGAM) and glutamate. The FGAM synthase complex is composed of three subunits. PurQ produces an ammonia molecule by converting glutamine to glutamate. PurL transfers the ammonia molecule to FGAR to form FGAM in an ATP-dependent manner. PurS interacts with PurQ and PurL and is thought to assist in the transfer of the ammonia molecule from PurQ to PurL. The chain is Phosphoribosylformylglycinamidine synthase subunit PurQ from Synechococcus sp. (strain CC9605).